Consider the following 126-residue polypeptide: Membrane-anchored ubiquitin-fold protein 2 (126 aa).

Residues 14–79 enclose the Ubiquitin-like domain; it reads VEVRFRLDDG…VLENNRTLAE (66 aa). Cys123 is subject to Cysteine methyl ester. The S-geranylgeranyl cysteine moiety is linked to residue Cys123. Residues 124–126 constitute a propeptide, removed in mature form; the sequence is TIL.

The protein resides in the cell membrane. Its function is as follows. May serve as docking site to facilitate the association of other proteins to the plasma membrane. The polypeptide is Membrane-anchored ubiquitin-fold protein 2 (MUB2) (Oryza sativa subsp. japonica (Rice)).